The chain runs to 347 residues: Dihydroorotate dehydrogenase (quinone) (347 aa).

FMN is bound by residues 62–66 (AGLDK) and Ala86. Lys66 is a substrate binding site. Residue 111–115 (NRMGF) participates in substrate binding. FMN is bound by residues Asn139 and Asn172. Residue Asn172 participates in substrate binding. Ser175 (nucleophile) is an active-site residue. Residue Asn177 participates in substrate binding. Positions 217 and 245 each coordinate FMN. 246 to 247 (NT) lines the substrate pocket. Residues Gly268, Gly297, and 318-319 (YT) each bind FMN.

This sequence belongs to the dihydroorotate dehydrogenase family. Type 2 subfamily. Monomer. FMN serves as cofactor.

Its subcellular location is the cell membrane. It catalyses the reaction (S)-dihydroorotate + a quinone = orotate + a quinol. It participates in pyrimidine metabolism; UMP biosynthesis via de novo pathway; orotate from (S)-dihydroorotate (quinone route): step 1/1. In terms of biological role, catalyzes the conversion of dihydroorotate to orotate with quinone as electron acceptor. This chain is Dihydroorotate dehydrogenase (quinone), found in Coxiella burnetii (strain CbuK_Q154) (Coxiella burnetii (strain Q154)).